The primary structure comprises 545 residues: Capsular polysaccharide phosphotransferase SacB (545 aa).

The protein belongs to the stealth family.

Functionally, may be the polymerase that links individual UDP-N-acetyl-D-mannosamine monomers. In serotype A the capsule is composed of repeated units of (alpha 1-6)-linked N-acetyl-D-mannosamine-1-phosphate. This chain is Capsular polysaccharide phosphotransferase SacB (sacB), found in Neisseria meningitidis serogroup A.